A 384-amino-acid polypeptide reads, in one-letter code: Flap endonuclease 1 (384 aa).

Residues 1-108 (MGIHKLMDLL…GELARRQKAK (108 aa)) form an N-domain region. Asp34 is a binding site for Mg(2+). Arg74 is a binding site for DNA. The Mg(2+) site is built by Asp90, Glu162, Glu164, Asp183, and Asp185. The segment at 126–254 (EALKQEQRNL…VNAFKLITEH (129 aa)) is I-domain. Residue Glu162 participates in DNA binding. The DNA site is built by Gly232 and Asp234. Asp234 provides a ligand contact to Mg(2+). Positions 340 to 384 (AKEHKGSQTRLNDFFKVQPKDTSSTSKASKKPTNTKSANKKGGKK) are disordered. Positions 346–354 (SQTRLNDFF) are interaction with PCNA. The segment covering 359 to 376 (KDTSSTSKASKKPTNTKS) has biased composition (low complexity).

Belongs to the XPG/RAD2 endonuclease family. FEN1 subfamily. As to quaternary structure, interacts with PCNA. Three molecules of FEN1 bind to one PCNA trimer with each molecule binding to one PCNA monomer. PCNA stimulates the nuclease activity without altering cleavage specificity. It depends on Mg(2+) as a cofactor. In terms of processing, phosphorylated. Phosphorylation upon DNA damage induces relocalization to the nuclear plasma.

The protein resides in the nucleus. Its subcellular location is the nucleolus. It is found in the nucleoplasm. The protein localises to the mitochondrion. Functionally, structure-specific nuclease with 5'-flap endonuclease and 5'-3' exonuclease activities involved in DNA replication and repair. During DNA replication, cleaves the 5'-overhanging flap structure that is generated by displacement synthesis when DNA polymerase encounters the 5'-end of a downstream Okazaki fragment. It enters the flap from the 5'-end and then tracks to cleave the flap base, leaving a nick for ligation. Also involved in the long patch base excision repair (LP-BER) pathway, by cleaving within the apurinic/apyrimidinic (AP) site-terminated flap. Acts as a genome stabilization factor that prevents flaps from equilibrating into structures that lead to duplications and deletions. Also possesses 5'-3' exonuclease activity on nicked or gapped double-stranded DNA, and exhibits RNase H activity. Also involved in replication and repair of rDNA and in repairing mitochondrial DNA. This is Flap endonuclease 1 from Tetrahymena thermophila (strain SB210).